Here is a 244-residue protein sequence, read N- to C-terminus: 1-(5-phosphoribosyl)-5-[(5-phosphoribosylamino)methylideneamino] imidazole-4-carboxamide isomerase (244 aa).

D13 (proton acceptor) is an active-site residue. D132 functions as the Proton donor in the catalytic mechanism.

The protein belongs to the HisA/HisF family.

The protein localises to the cytoplasm. The enzyme catalyses 1-(5-phospho-beta-D-ribosyl)-5-[(5-phospho-beta-D-ribosylamino)methylideneamino]imidazole-4-carboxamide = 5-[(5-phospho-1-deoxy-D-ribulos-1-ylimino)methylamino]-1-(5-phospho-beta-D-ribosyl)imidazole-4-carboxamide. The protein operates within amino-acid biosynthesis; L-histidine biosynthesis; L-histidine from 5-phospho-alpha-D-ribose 1-diphosphate: step 4/9. This is 1-(5-phosphoribosyl)-5-[(5-phosphoribosylamino)methylideneamino] imidazole-4-carboxamide isomerase from Renibacterium salmoninarum (strain ATCC 33209 / DSM 20767 / JCM 11484 / NBRC 15589 / NCIMB 2235).